A 391-amino-acid polypeptide reads, in one-letter code: Cdc42 effector protein 1 (391 aa).

Phosphoserine occurs at positions 19 and 27. Phosphothreonine is present on Thr-34. In terms of domain architecture, CRIB spans 38–52; the sequence is ISHPLGDFRHTMHVG. Phosphoserine is present on Ser-39. Arg-53 is modified (omega-N-methylarginine). 7 positions are modified to phosphoserine: Ser-65, Ser-73, Ser-77, Ser-101, Ser-113, Ser-121, and Ser-139. Residues 163 to 189 are disordered; it reads ISRLPRSEKPHDRDRDGSFPSEPGLRR. Residues 167 to 179 show a composition bias toward basic and acidic residues; sequence PRSEKPHDRDRDG. 4 positions are modified to phosphoserine: Ser-180, Ser-190, Ser-192, and Ser-195. 8 consecutive repeat copies span residues 220 to 226, 227 to 233, 234 to 240, 241 to 247, 248 to 254, 255 to 261, 262 to 268, and 269 to 275. The interval 220–275 is 8 X 7 AA tandem repeats of [PT]-[AT]-A-[ENT]-[PT]-[PTS]-[AG]; it reads PAAETPAPAANPPAPTANPTGPAANPPATTANPPAPAANPSAPAATPTGPAANPPA. Positions 221–338 are disordered; it reads AAETPAPAAN…HHYPEMDARQ (118 aa). Low complexity predominate over residues 236-270; that stretch reads ANPTGPAANPPATTANPPAPAANPSAPAATPTGPA. The residue at position 303 (Ser-303) is a Phosphoserine. Positions 327-338 are enriched in basic and acidic residues; that stretch reads GGHHYPEMDARQ. Ser-350 and Ser-353 each carry phosphoserine. The segment at 354–391 is disordered; sequence LDEEWRAPQAGSRTPVPSTVQANTFEFADAEEDDEVKV. The segment covering 364–377 has biased composition (polar residues); that stretch reads GSRTPVPSTVQANT. Positions 381–391 are enriched in acidic residues; that stretch reads ADAEEDDEVKV.

The protein belongs to the BORG/CEP family. As to quaternary structure, interacts with RHOQ and CDC42, in a GTP-dependent manner. In terms of tissue distribution, endothelial and bone marrow stromal cells.

The protein resides in the endomembrane system. It is found in the cytoplasm. The protein localises to the cytoskeleton. In terms of biological role, probably involved in the organization of the actin cytoskeleton. Induced membrane extensions in fibroblasts. This chain is Cdc42 effector protein 1 (CDC42EP1), found in Homo sapiens (Human).